Reading from the N-terminus, the 186-residue chain is uncharacterized protein (186 aa).

The first 28 residues, 1–28 (MSVKPAALFRISAALAVAGLGASLIASA), serve as a signal peptide directing secretion.

This is an uncharacterized protein from Rhizobium meliloti (strain 1021) (Ensifer meliloti).